The sequence spans 128 residues: Iron-sulfur cluster insertion protein ErpA 1 (128 aa).

Iron-sulfur cluster is bound by residues C47, C111, and C113.

This sequence belongs to the HesB/IscA family. As to quaternary structure, homodimer. Iron-sulfur cluster serves as cofactor.

Required for insertion of 4Fe-4S clusters for at least IspG. The polypeptide is Iron-sulfur cluster insertion protein ErpA 1 (Methylococcus capsulatus (strain ATCC 33009 / NCIMB 11132 / Bath)).